Consider the following 226-residue polypeptide: 2-C-methyl-D-erythritol 4-phosphate cytidylyltransferase (226 aa).

It belongs to the IspD/TarI cytidylyltransferase family. IspD subfamily.

The enzyme catalyses 2-C-methyl-D-erythritol 4-phosphate + CTP + H(+) = 4-CDP-2-C-methyl-D-erythritol + diphosphate. The protein operates within isoprenoid biosynthesis; isopentenyl diphosphate biosynthesis via DXP pathway; isopentenyl diphosphate from 1-deoxy-D-xylulose 5-phosphate: step 2/6. In terms of biological role, catalyzes the formation of 4-diphosphocytidyl-2-C-methyl-D-erythritol from CTP and 2-C-methyl-D-erythritol 4-phosphate (MEP). This Bacillus cytotoxicus (strain DSM 22905 / CIP 110041 / 391-98 / NVH 391-98) protein is 2-C-methyl-D-erythritol 4-phosphate cytidylyltransferase.